We begin with the raw amino-acid sequence, 258 residues long: Thymidylate synthase (258 aa).

A dUMP-binding site is contributed by Arg-21. His-51 provides a ligand contact to (6R)-5,10-methylene-5,6,7,8-tetrahydrofolate. 121 to 122 provides a ligand contact to dUMP; the sequence is RR. Cys-141 acts as the Nucleophile in catalysis. DUMP-binding positions include 161–164, Asn-172, and 202–204; these read RSAD and HLY. Residue Asp-164 participates in (6R)-5,10-methylene-5,6,7,8-tetrahydrofolate binding. Ala-257 contacts (6R)-5,10-methylene-5,6,7,8-tetrahydrofolate.

It belongs to the thymidylate synthase family. Bacterial-type ThyA subfamily. In terms of assembly, homodimer.

It is found in the cytoplasm. The catalysed reaction is dUMP + (6R)-5,10-methylene-5,6,7,8-tetrahydrofolate = 7,8-dihydrofolate + dTMP. The protein operates within pyrimidine metabolism; dTTP biosynthesis. Its function is as follows. Catalyzes the reductive methylation of 2'-deoxyuridine-5'-monophosphate (dUMP) to 2'-deoxythymidine-5'-monophosphate (dTMP) while utilizing 5,10-methylenetetrahydrofolate (mTHF) as the methyl donor and reductant in the reaction, yielding dihydrofolate (DHF) as a by-product. This enzymatic reaction provides an intracellular de novo source of dTMP, an essential precursor for DNA biosynthesis. This chain is Thymidylate synthase, found in Dichelobacter nodosus (strain VCS1703A).